The primary structure comprises 360 residues: Aminomethyltransferase (360 aa).

The protein belongs to the GcvT family. As to quaternary structure, the glycine cleavage system is composed of four proteins: P, T, L and H.

It carries out the reaction N(6)-[(R)-S(8)-aminomethyldihydrolipoyl]-L-lysyl-[protein] + (6S)-5,6,7,8-tetrahydrofolate = N(6)-[(R)-dihydrolipoyl]-L-lysyl-[protein] + (6R)-5,10-methylene-5,6,7,8-tetrahydrofolate + NH4(+). The glycine cleavage system catalyzes the degradation of glycine. The protein is Aminomethyltransferase of Legionella pneumophila (strain Corby).